The following is a 169-amino-acid chain: Putative phosphoesterase SH1944 (169 aa).

The Proton donor role is filled by histidine 34. Short sequence motifs (HXTX) lie at residues 34–37 (HITI) and 115–118 (HFTI). Histidine 115 functions as the Proton acceptor in the catalytic mechanism.

The protein belongs to the 2H phosphoesterase superfamily. YjcG family.

This is Putative phosphoesterase SH1944 from Staphylococcus haemolyticus (strain JCSC1435).